Here is a 335-residue protein sequence, read N- to C-terminus: 5-dehydro-2-deoxygluconokinase (335 aa).

Belongs to the carbohydrate kinase PfkB family.

It carries out the reaction 5-dehydro-2-deoxy-D-gluconate + ATP = 6-phospho-5-dehydro-2-deoxy-D-gluconate + ADP + H(+). The protein operates within polyol metabolism; myo-inositol degradation into acetyl-CoA; acetyl-CoA from myo-inositol: step 5/7. Catalyzes the phosphorylation of 5-dehydro-2-deoxy-D-gluconate (2-deoxy-5-keto-D-gluconate or DKG) to 6-phospho-5-dehydro-2-deoxy-D-gluconate (DKGP). This Geobacillus kaustophilus (strain HTA426) protein is 5-dehydro-2-deoxygluconokinase.